Here is a 336-residue protein sequence, read N- to C-terminus: Meiotically up-regulated gene 33 protein (336 aa).

The disordered stretch occupies residues 232–336 (ISEDDGLKRG…KPSRFSWGRS (105 aa)). Polar residues predominate over residues 250–262 (TFSNDSRSLSSYA).

The protein resides in the cytoplasm. Has a role in meiosis. The sequence is that of Meiotically up-regulated gene 33 protein (mug33) from Schizosaccharomyces pombe (strain 972 / ATCC 24843) (Fission yeast).